Consider the following 335-residue polypeptide: Flagellar P-ring protein (335 aa).

An N-terminal signal peptide occupies residues Met1–Ala24.

The protein belongs to the FlgI family. In terms of assembly, the basal body constitutes a major portion of the flagellar organelle and consists of four rings (L,P,S, and M) mounted on a central rod.

It is found in the periplasm. The protein localises to the bacterial flagellum basal body. Functionally, assembles around the rod to form the L-ring and probably protects the motor/basal body from shearing forces during rotation. The sequence is that of Flagellar P-ring protein from Bdellovibrio bacteriovorus (strain ATCC 15356 / DSM 50701 / NCIMB 9529 / HD100).